Here is a 494-residue protein sequence, read N- to C-terminus: MIQVLLVTICLAVFPFQGSSKTLKSGNVNDYEVVNPQKITGLPVGAFKQPEKKYEDAVQYEFEVNGEPVVLHLEKNKGLFSEDYSETHYSPDGSEITTNPPVEDHCYYHGRVQNDADSTASISTCNGLKGFFTLRGETYLIEPLKVPDSESHAVYKYEDAKKKDEAPKMCGVTLTNWESDEPIKKASHLVATSEQQHFHPRYVQLVIVADHSMVTKNNNDLTALTTWIHQIVNDMIVMYRILNIHITLANVEIWSSGDLIAVTSSAPTTLRSFGEWRARNLVNRITHDNAQLITAVHLDNLIGYGYLGTMCDPQSSVAITEDHSTDHLWVAATMAHEMGHNLGMNHDGNQCNCGAAGCIMSAIISQYRSYQFSDCSMNEYRNYITTHNPPCILNQALRTDTVSTPVSENELLQNSVNPCYDPVTCQPKEKEDCESGPCCDNCKFLKEGTICKMARGDNMHDYCNGKTCDCPRNPYKGEHDPMEWPAPAKGSVLM.

Residues 1–20 (MIQVLLVTICLAVFPFQGSS) form the signal peptide. Residues 21–193 (KTLKSGNVND…KKASHLVATS (173 aa)) constitute a propeptide that is removed on maturation. Positions 201-396 (RYVQLVIVAD…HNPPCILNQA (196 aa)) constitute a Peptidase M12B domain. 3 disulfide bridges follow: Cys-311–Cys-391, Cys-351–Cys-375, and Cys-353–Cys-358. Residue His-336 coordinates Zn(2+). Glu-337 is an active-site residue. His-340 and His-346 together coordinate Zn(2+). The propeptide occupies 410-431 (ELLQNSVNPCYDPVTCQPKEKE). The region spanning 417–478 (NPCYDPVTCQ…DCPRNPYKGE (62 aa)) is the Disintegrin domain. 4 disulfide bridges follow: Cys-433–Cys-442, Cys-438–Cys-463, Cys-439–Cys-468, and Cys-451–Cys-470. Residues 455-457 (RGD) carry the Cell attachment site motif. Positions 482-494 (MEWPAPAKGSVLM) are excised as a propeptide.

Belongs to the venom metalloproteinase (M12B) family. P-II subfamily. P-IIa sub-subfamily. Monomer (disintegrin). Expressed by the venom gland.

The protein localises to the secreted. Impairs hemostasis in the envenomed animal. In terms of biological role, inhibits ADP-induced platelet aggregation (IC(50)=168 nM). Inhibits alpha-5/beta-1 (ITGA5/ITGB1) integrin and induces the expression of a ligand-induced binding site epitope on beta-1 integrin subunit. Has a direct chemotactic stimulus on human neutrophils in vitro. This Echis ocellatus (Ocellated saw-scaled viper) protein is Zinc metalloproteinase/disintegrin.